Reading from the N-terminus, the 230-residue chain is Large ribosomal subunit protein uL3 (230 aa).

2 disordered regions span residues 125 to 149 (QAIGPRSHGGGGGSKPIRQTGSLGD) and 210 to 230 (PNPKNPVSLFVPNSDKEVKNE).

It belongs to the universal ribosomal protein uL3 family. In terms of assembly, part of the 50S ribosomal subunit. Forms a cluster with proteins L14 and L19.

One of the primary rRNA binding proteins, it binds directly near the 3'-end of the 23S rRNA, where it nucleates assembly of the 50S subunit. The polypeptide is Large ribosomal subunit protein uL3 (Mesomycoplasma hyopneumoniae (strain J / ATCC 25934 / NCTC 10110) (Mycoplasma hyopneumoniae)).